We begin with the raw amino-acid sequence, 400 residues long: MGATGVLLCVVLHFLQMVTQSSEKFTVTGLQRPVLAPLGGNVELSCQLSPPQQAQHMEIRWFRNRYREPVYLYRNGKDLHGETISKYVERTELLKDDIGKGKVTLRIFKLTADDDGSYHCVFKVGEFYEEHITEIKVTATSSVMYILMQPPNIKGVMLECHSGGWFPQPHMEWRDNKGNIIPATSKAHSQDENKLFNMTMTLLIEASSHRSITCYLQNLLTHQEESISIVLSGELFSWKRVWIMILTTIGFMMIAFCMTYCVQQHLLYGTFSKGKCHWLKSTMIFMFSVIAVTGVMLILHLKQRVPVSDQHFELDTLWLEDISVILCVLIVFIIKLISFIYFRLEGDHQGWSLPPYLSATPTAAICRLAVPEYSRGHLQLDSEDDLAGMGPSPFFITPCF.

Residues 1 to 21 (MGATGVLLCVVLHFLQMVTQS) form the signal peptide. Topologically, residues 22–240 (SEKFTVTGLQ…LSGELFSWKR (219 aa)) are extracellular. Positions 23-133 (EKFTVTGLQR…VGEFYEEHIT (111 aa)) constitute an Ig-like V-type domain. Disulfide bonds link cysteine 46-cysteine 120 and cysteine 160-cysteine 214. An Ig-like C1-type domain is found at 139 to 225 (ATSSVMYILM…LQNLLTHQEE (87 aa)). An N-linked (GlcNAc...) asparagine glycan is attached at asparagine 197. The helical transmembrane segment at 241-261 (VWIMILTTIGFMMIAFCMTYC) threads the bilayer. Residues 262–280 (VQQHLLYGTFSKGKCHWLK) lie on the Cytoplasmic side of the membrane. A helical transmembrane segment spans residues 281–301 (STMIFMFSVIAVTGVMLILHL). The Extracellular segment spans residues 302-321 (KQRVPVSDQHFELDTLWLED). The chain crosses the membrane as a helical span at residues 322-342 (ISVILCVLIVFIIKLISFIYF). The Cytoplasmic segment spans residues 343–400 (RLEGDHQGWSLPPYLSATPTAAICRLAVPEYSRGHLQLDSEDDLAGMGPSPFFITPCF).

The protein belongs to the SKINT family. In terms of tissue distribution, expressed in skin, thymus and mammary gland.

Its subcellular location is the membrane. May act by engaging a cell surface molecule on immature T-cells in the embryonic thymus. The polypeptide is Selection and upkeep of intraepithelial T-cells protein 2 (Skint2) (Mus musculus (Mouse)).